Here is a 342-residue protein sequence, read N- to C-terminus: Alpha-(1,3)-fucosyltransferase 7 (342 aa).

At 1 to 11 (MQNAGLSPTPS) the chain is on the cytoplasmic side. The helical; Signal-anchor for type II membrane protein transmembrane segment at 12-31 (LRALGGLAMAALLSTVWLWW) threads the bilayer. Residues 32 to 342 (RLGAAPGGAP…YQDLEGWFQA (311 aa)) are Extracellular-facing. Cysteines 68 and 76 form a disulfide. N-linked (GlcNAc...) asparagine glycosylation is present at N81. C211 and C214 are oxidised to a cystine. N-linked (GlcNAc...) asparagine glycosylation is present at N291. Residues C318 and C321 are joined by a disulfide bond.

Belongs to the glycosyltransferase 10 family. In terms of processing, N-glycosylated. As to expression, expressed in thymus, spleen, liver and lung. Highly expressed in the thymus and lower expressed in the lung.

The protein localises to the membrane. The catalysed reaction is an N-acetyl-alpha-neuraminyl-(2-&gt;3)-beta-D-galactosyl-(1-&gt;4)-N-acetyl-beta-D-glucosaminyl derivative + GDP-beta-L-fucose = an alpha-Neu5Ac-(2-&gt;3)-beta-D-Gal-(1-&gt;4)-[alpha-L-Fuc-(1-&gt;3)]-beta-D-GlcNAc derivative + GDP + H(+). It catalyses the reaction a neolactoside IV(3)-alpha-NeuAc-nLc4Cer + GDP-beta-L-fucose = a neolactoside IV(3)-alpha-NeuNAc,III(3)-alpha-Fuc-nLc4Cer + GDP + H(+). The enzyme catalyses a neolactoside VI(3)-alpha-NeuNAc-nLc6Cer + GDP-beta-L-fucose = a neolactoside VI(3)-alpha-NeuAc,V(3)-alphaFuc-nLc6Cer + GDP + H(+). It carries out the reaction an alpha-Neu5Ac-(2-&gt;3)-beta-D-Gal-(1-&gt;4)-beta-D-GlcNAc-(1-&gt;3)-beta-D-Gal-(1-&gt;4)-[alpha-L-Fuc-(1-&gt;3)]-beta-D-GlcNAc derivative + GDP-beta-L-fucose = an alpha-Neu5Ac-(2-&gt;3)-beta-D-Gal-(1-&gt;4)-[alpha-L-Fuc-(1-&gt;3)]-beta-D-GlcNAc-(1-&gt;3)-beta-D-Gal-(1-&gt;4)-[alpha-L-Fuc-(1-&gt;3)]-beta-D-GlcNAc derivative + GDP + H(+). The catalysed reaction is an alpha-Neu5Ac-(2-&gt;3)-beta-D-Gal-(1-&gt;4)-beta-D-GlcNAc6S derivative + GDP-beta-L-fucose = an alpha-Neu5Ac-(2-&gt;3)-beta-D-Gal-(1-&gt;4)-[alpha-L-Fuc-(1-&gt;3)]-beta-D-GlcNAc6S derivative + GDP + H(+). It catalyses the reaction alpha-Neu5Ac-(2-&gt;3)-beta-D-Gal-(1-&gt;4)-beta-D-GlcNAc-(1-&gt;3)-beta-D-Gal-(1-&gt;4)-D-Glc + GDP-beta-L-fucose = alpha-Neu5Ac-(2-&gt;3)-beta-D-Gal-(1-&gt;4)-[alpha-L-Fuc-(1-&gt;3)]-beta-D-GlcNAc-(1-&gt;3)-beta-D-Gal-(1-&gt;4)-D-Glc + GDP + H(+). The enzyme catalyses alpha-Neu5Ac-(2-&gt;3)-beta-D-Gal-(1-&gt;4)-beta-D-GlcNAc-(1-&gt;3)-beta-D-Gal-(1-&gt;4)-[alpha-L-Fuc-(1-&gt;3)]-beta-D-GlcNAc-(1-&gt;3)-beta-D-Gal-(1-&gt;4)-beta-D-GlcNAc + GDP-beta-L-fucose = alpha-Neu5Ac-(2-&gt;3)-beta-D-Gal-(1-&gt;4)-[alpha-L-Fuc-(1-&gt;3)]-beta-D-GlcNAc-(1-&gt;3)-beta-D-Gal-(1-&gt;4)-[alpha-L-Fuc-(1-&gt;3)]-beta-D-GlcNAc-(1-&gt;3)-beta-D-Gal-(1-&gt;4)-beta-D-GlcNAc + GDP + H(+). It carries out the reaction alpha-Neu5Ac-(2-&gt;3)-beta-D-Gal-(1-&gt;4)-beta-D-GlcNAc-(1-&gt;3)-beta-D-Gal-(1-&gt;4)-beta-D-GlcNAc-(1-&gt;3)-beta-D-Gal-(1-&gt;4)-beta-D-GlcNAc + GDP-beta-L-fucose = alpha-Neu5Ac-(2-&gt;3)-beta-D-Gal-(1-&gt;4)-[alpha-L-Fuc-(1-&gt;3)]-beta-D-GlcNAc-(1-&gt;3)-beta-D-Gal-(1-&gt;4)-beta-D-GlcNAc-(1-&gt;3)-beta-D-Gal-(1-&gt;4)-beta-D-GlcNAc + GDP + H(+). It participates in protein modification; protein glycosylation. Inhibited by NaCl. Inhibited by GDP in a concentration dependent manner, with an IC(50) value of 93 uM. Also inhibited by GMP and GTP. Inhibited by N-ethylmaleimide. Activated by poly(ethylene glycol) by enhancing the thermal stability of FUT7. Activated by Mn2+, Ca2+, and Mg2+. Both panosialin A and B inhibit activity with IC(50) values of 4.8 and 5.3 ug/ml, respectively. Inhibited by gallic acid (GA) and (-)-epigallocatechin gallate (EGCG) in a time-dependent and irreversible manner with IC(50) values of 60 and 700 nM, respectively. Its function is as follows. Catalyzes the transfer of L-fucose, from a guanosine diphosphate-beta-L-fucose, to the N-acetyl glucosamine (GlcNAc) of a distal alpha2,3 sialylated lactosamine unit of a glycoprotein or a glycolipid-linked sialopolylactosamines chain through an alpha-1,3 glycosidic linkage and participates in the final fucosylation step in the biosynthesis of the sialyl Lewis X (sLe(x)), a carbohydrate involved in cell and matrix adhesion during leukocyte trafficking and fertilization. In vitro, also synthesizes sialyl-dimeric-Lex structures, from VIM-2 structures and both di-fucosylated and trifucosylated structures from mono-fucosylated precursors. However does not catalyze alpha 1-3 fucosylation when an internal alpha 1-3 fucosylation is present in polylactosamine chain and the fucosylation rate of the internal GlcNAc residues is reduced once fucose has been added to the distal GlcNAc. Also catalyzes the transfer of a fucose from GDP-beta-fucose to the 6-sulfated a(2,3)sialylated substrate to produce 6-sulfo sLex mediating significant L-selectin-dependent cell adhesion. Through sialyl-Lewis(x) biosynthesis, can control SELE- and SELP-mediated cell adhesion with leukocytes and allows leukocytes tethering and rolling along the endothelial tissue thereby enabling the leukocytes to accumulate at a site of inflammation. May enhance embryo implantation through sialyl Lewis X (sLeX)-mediated adhesion of embryo cells to endometrium. May affect insulin signaling by up-regulating the phosphorylation and expression of some signaling molecules involved in the insulin-signaling pathway through SLe(x) which is present on the glycans of the INSRR alpha subunit. This chain is Alpha-(1,3)-fucosyltransferase 7, found in Bos taurus (Bovine).